Reading from the N-terminus, the 93-residue chain is LSM complex subunit LSM5 (93 aa).

The Sm domain occupies 7 to 87 (LPLEVIDKTI…IAILVPGGKK (81 aa)).

It belongs to the snRNP Sm proteins family. Component of the heptameric LSM1-LSM7 complex that forms a seven-membered ring structure with a donut shape. The LSm subunits are arranged in the order LSM1, LSM2, LSM3, LSM6, LSM5, LSM7 and LSM4. Except for LSM1, where a C-terminal helix crosses the ring structure to form additional interactions with LSM3 and LSM6, each subunit interacts only with its two neighboring subunits. The LSM1-LSM7 complex interacts with PAT1; within the complex PAT1 has direct interactions with LSM2 and LSM3. The LSM1-LSM7 complex interacts with XRN1. Component of the heptameric LSM2-LSM8 complex that forms a seven-membered ring structure with a donut shape; an RNA strand can pass through the hole in the center of the ring structure. The LSm subunits are arranged in the order LSM8, LSM2, LSM3, LSM6, LSM5, LSM7 and LSM4. Component of the spliceosome U4/U6-U5 tri-snRNP complex composed of the U4, U6 and U5 snRNAs and at least PRP3, PRP4, PRP6, PRP8, PRP18, PRP31, PRP38, SNU13, SNU23, SNU66, SNU114, SPP381, SMB1, SMD1, SMD2, SMD3, SMX2, SMX3, LSM2, LSM3, LSM4, LSM5, LSM6, LSM7, LSM8, BRR2 and DIB1. May be found in a complex comprising LSM2-LSM7 without LSM1 or LSM8; the complex associates with pre-P RNA and snoRNA SNR5.

It localises to the nucleus. The protein localises to the nucleolus. It is found in the cytoplasm. In terms of biological role, component of LSm protein complexes, which are involved in RNA processing and may function in a chaperone-like manner. Component of the cytoplasmic LSM1-LSM7 complex which is involved in mRNA degradation by activating the decapping step. Together with PAT1, the LSM1-LSM7 complex binds to osmotic stress-activated mRNAs to attenuate the osmotic stress response, probably by limiting ribosome access to the mRNA and consequently translation. Component of the nuclear LSM2-LSM8 complex, which is involved in spliceosome assembly. The LSM2-LSM8 complex plays a role in the biogenesis of the spliceosomal U4/U6-U5 tri-snRNP complex by accelerating PRP24-mediated annealing of U4/U6 di-snRNA. The LSM2-LSM8 complex binds U6 snRNA terminating with a non-cyclic 3' phosphate group. LSM2-LSM8 is probably also involved in degradation of nuclear pre-mRNA by targeting them for decapping. LSM2-LSM8 could be involved in processing of pre-tRNAs, pre-rRNAs and U3 snoRNA, although involvement may be indirect. In a complex that probably contains LSM2-LSM7, but not LSM1 or LSM8, associates with the precursor of the RNA component of RNase P (pre-P RNA) and may be involved in maturing pre-P RNA; the complex also associates with snoRNA SNR5. The chain is LSM complex subunit LSM5 (LSM5) from Saccharomyces cerevisiae (strain ATCC 204508 / S288c) (Baker's yeast).